A 204-amino-acid chain; its full sequence is ADP-ribosylation factor-like protein 15 (204 aa).

Residues 39 to 46 (GLTGSGKT), 82 to 86 (ELGGA), and 142 to 145 (NHQD) each bind GTP.

It belongs to the small GTPase superfamily. Arf family.

In Mus musculus (Mouse), this protein is ADP-ribosylation factor-like protein 15 (Arl15).